The sequence spans 380 residues: Cytochrome b (380 aa).

The next 4 membrane-spanning stretches (helical) occupy residues 34–54 (FGSL…LLAT), 78–99 (WLIR…YLHI), 114–134 (WNTG…GYVL), and 179–199 (FFAL…IHLT). Heme b contacts are provided by His84 and His98. Residues His183 and His197 each contribute to the heme b site. His202 contacts a ubiquinone. 4 helical membrane-spanning segments follow: residues 227–247 (LKDI…ALFS), 289–309 (LGGV…PLLH), 321–341 (FSQF…WVGS), and 348–368 (FIII…LLFP).

Belongs to the cytochrome b family. As to quaternary structure, the cytochrome bc1 complex contains 11 subunits: 3 respiratory subunits (MT-CYB, CYC1 and UQCRFS1), 2 core proteins (UQCRC1 and UQCRC2) and 6 low-molecular weight proteins (UQCRH/QCR6, UQCRB/QCR7, UQCRQ/QCR8, UQCR10/QCR9, UQCR11/QCR10 and a cleavage product of UQCRFS1). This cytochrome bc1 complex then forms a dimer. Heme b serves as cofactor.

It localises to the mitochondrion inner membrane. Its function is as follows. Component of the ubiquinol-cytochrome c reductase complex (complex III or cytochrome b-c1 complex) that is part of the mitochondrial respiratory chain. The b-c1 complex mediates electron transfer from ubiquinol to cytochrome c. Contributes to the generation of a proton gradient across the mitochondrial membrane that is then used for ATP synthesis. The polypeptide is Cytochrome b (MT-CYB) (Alle alle (Dovekie)).